The chain runs to 328 residues: tRNA dimethylallyltransferase (328 aa).

25–32 serves as a coordination point for ATP; the sequence is GNTGSGKS. Residue 27–32 coordinates substrate; it reads TGSGKS. An interaction with substrate tRNA region spans residues 50–53; it reads DSRQ.

This sequence belongs to the IPP transferase family. As to quaternary structure, monomer. Mg(2+) is required as a cofactor.

It catalyses the reaction adenosine(37) in tRNA + dimethylallyl diphosphate = N(6)-dimethylallyladenosine(37) in tRNA + diphosphate. Functionally, catalyzes the transfer of a dimethylallyl group onto the adenine at position 37 in tRNAs that read codons beginning with uridine, leading to the formation of N6-(dimethylallyl)adenosine (i(6)A). The sequence is that of tRNA dimethylallyltransferase from Dehalococcoides mccartyi (strain ATCC BAA-2100 / JCM 16839 / KCTC 5957 / BAV1).